A 309-amino-acid chain; its full sequence is Olfactory receptor 5AK2 (309 aa).

Over 1–25 (MTLGNSTEVTEFYLLGFGAQHEFWC) the chain is Extracellular. Residue Asn5 is glycosylated (N-linked (GlcNAc...) asparagine). The chain crosses the membrane as a helical span at residues 26–46 (ILFIVFLLIYVTSIMGNSGII). Over 47–54 (LLINTDSR) the chain is Cytoplasmic. A helical transmembrane segment spans residues 55–75 (FQTLTYFFLQHLAFVDICYTS). The Extracellular segment spans residues 76–99 (AITPKMLQSFTEEKNLMLFQGCVI). A disulfide bridge connects residues Cys97 and Cys189. The chain crosses the membrane as a helical span at residues 100–120 (QFLVYATFATSDCYLLAMMAV). At 121-133 (DPYVAICKPLHYT) the chain is on the cytoplasmic side. Residues 134–154 (VIMSRTVCIRLVAGSYIMGSI) form a helical membrane-spanning segment. N-linked (GlcNAc...) asparagine glycosylation occurs at Asn155. The Extracellular segment spans residues 155-196 (NASVQTGFTCSLSFCKSNSINHFFCDVPPILALSCSNVDINI). A helical membrane pass occupies residues 197-217 (MLLVVFVGSNLIFTGLVVIFS). Topologically, residues 218–237 (YIYIMATILKMSSSAGRKKS) are cytoplasmic. Residues 238–258 (FSTCASHLTAVTIFYGTLSYM) form a helical membrane-spanning segment. The Extracellular portion of the chain corresponds to 259-271 (YLQSHSNNSQENM). Asn265 carries an N-linked (GlcNAc...) asparagine glycan. The helical transmembrane segment at 272–292 (KVAFIFYGTVIPMLNPLIYSL) threads the bilayer. Over 293 to 309 (RNKEVKEALKVIGKKLF) the chain is Cytoplasmic.

It belongs to the G-protein coupled receptor 1 family.

It localises to the cell membrane. Functionally, odorant receptor. This is Olfactory receptor 5AK2 (OR5AK2) from Homo sapiens (Human).